Here is a 217-residue protein sequence, read N- to C-terminus: Outer-membrane lipoprotein LolB (217 aa).

The N-terminal stretch at 1–20 is a signal peptide; that stretch reads MSKTVRTLALGGLVLAGLSA. The N-palmitoyl cysteine moiety is linked to residue Cys21. A lipid anchor (S-diacylglycerol cysteine) is attached at Cys21. The tract at residues 105–124 is disordered; it reads DTTSGAGRLEGLEGGPRSGP.

It belongs to the LolB family. In terms of assembly, monomer.

Its subcellular location is the cell outer membrane. Plays a critical role in the incorporation of lipoproteins in the outer membrane after they are released by the LolA protein. The polypeptide is Outer-membrane lipoprotein LolB (Xanthomonas axonopodis pv. citri (strain 306)).